Consider the following 334-residue polypeptide: Histo-blood group ABO system transferase 2 (334 aa).

The Cytoplasmic portion of the chain corresponds to 1–15 (MKDLRFGRLKCYSLH). The chain crosses the membrane as a helical; Signal-anchor for type II membrane protein span at residues 16–36 (LGILPLTVLVLVFFCFVCLSL). Over 37–334 (RSQEWGHPGA…VPKNHQAIRN (298 aa)) the chain is Lumenal. Residue N94 is glycosylated (N-linked (GlcNAc...) asparagine). Residues 102 to 104 (FAV), Y107, and 192 to 194 (DVD) contribute to the UDP-N-acetyl-alpha-D-galactosamine site. Residues D192 and D194 each coordinate Mn(2+). An alpha-L-fucosyl-(1-&gt;2)-beta-D-galactosyl derivative is bound by residues H214, T226, E284, and D307. Catalysis depends on E284, which acts as the Nucleophile.

This sequence belongs to the glycosyltransferase 6 family. The cofactor is Mn(2+). Large intestine, caecum, stomach, pancreas, submaxillary gland and kidney (at protein level). Ubiquitous.

It is found in the golgi apparatus. The protein localises to the golgi stack membrane. It localises to the secreted. The catalysed reaction is an alpha-L-fucosyl-(1-&gt;2)-beta-D-galactosyl derivative + UDP-N-acetyl-alpha-D-galactosamine = an N-acetyl-alpha-D-galactosaminyl-(1-&gt;3)-[alpha-L-fucosyl-(1-&gt;2)]-beta-D-galactosyl derivative + UDP + H(+). It catalyses the reaction an alpha-L-fucosyl-(1-&gt;2)-beta-D-galactosyl derivative + UDP-alpha-D-galactose = an alpha-D-galactosyl-(1-&gt;3)-[alpha-L-fucosyl-(1-&gt;2)]-beta-D-galactosyl derivative + UDP + H(+). It participates in protein modification; protein glycosylation. Possesses strong B transferase activity and weak A transferase activity. The polypeptide is Histo-blood group ABO system transferase 2 (Abo2) (Rattus norvegicus (Rat)).